Reading from the N-terminus, the 240-residue chain is MAQVSMRDMLQAGVHFGHQTRYWNPKMKPFIYGPRNGVHIINLEKTVPMFNEALVELTRIAGNNGKILFVGTKRAATEAVKAAALDCQQYYVNHRWLGGMLTNWKTVRQSIRRLKDLETQSQDGTFDKLTKKEALMRTREMEKLELSLGGIKEMGGLPDALFVIGADHEHIAVKEANNLGIPVFAIVDTNSDPDGVDFVIPGNDDAARAIQLYLSAAAAAVKEGRHQDAVTEENFVAEAE.

It belongs to the universal ribosomal protein uS2 family.

The polypeptide is Small ribosomal subunit protein uS2 (rpsB) (Pasteurella multocida (strain Pm70)).